The following is a 154-amino-acid chain: Endoribonuclease YbeY (154 aa).

Residues H117, H121, and H127 each coordinate Zn(2+).

It belongs to the endoribonuclease YbeY family. Requires Zn(2+) as cofactor.

It localises to the cytoplasm. Single strand-specific metallo-endoribonuclease involved in late-stage 70S ribosome quality control and in maturation of the 3' terminus of the 16S rRNA. The protein is Endoribonuclease YbeY of Polaromonas sp. (strain JS666 / ATCC BAA-500).